Reading from the N-terminus, the 165-residue chain is Phosphopantetheine adenylyltransferase (165 aa).

Thr-9 contributes to the substrate binding site. ATP is bound by residues 9-10 and His-17; that span reads TF. Residues Lys-41, Leu-73, and Arg-87 each contribute to the substrate site. Residues 88–90, Glu-98, and 123–129 contribute to the ATP site; these read GLR and YQFISGT.

The protein belongs to the bacterial CoaD family. As to quaternary structure, homohexamer. Mg(2+) serves as cofactor.

The protein resides in the cytoplasm. The catalysed reaction is (R)-4'-phosphopantetheine + ATP + H(+) = 3'-dephospho-CoA + diphosphate. It participates in cofactor biosynthesis; coenzyme A biosynthesis; CoA from (R)-pantothenate: step 4/5. Its function is as follows. Reversibly transfers an adenylyl group from ATP to 4'-phosphopantetheine, yielding dephospho-CoA (dPCoA) and pyrophosphate. The polypeptide is Phosphopantetheine adenylyltransferase (Burkholderia vietnamiensis (strain G4 / LMG 22486) (Burkholderia cepacia (strain R1808))).